Here is a 423-residue protein sequence, read N- to C-terminus: D-tagatose-1,6-bisphosphate aldolase subunit GatZ (423 aa).

This sequence belongs to the GatZ/KbaZ family. GatZ subfamily. As to quaternary structure, forms a complex with GatY.

Its pathway is carbohydrate metabolism; D-tagatose 6-phosphate degradation; D-glyceraldehyde 3-phosphate and glycerone phosphate from D-tagatose 6-phosphate: step 2/2. Component of the tagatose-1,6-bisphosphate aldolase GatYZ that is required for full activity and stability of the Y subunit. Could have a chaperone-like function for the proper and stable folding of GatY. When expressed alone, GatZ does not show any aldolase activity. Is involved in the catabolism of galactitol. The polypeptide is D-tagatose-1,6-bisphosphate aldolase subunit GatZ (Salmonella dublin (strain CT_02021853)).